Here is an 84-residue protein sequence, read N- to C-terminus: Putative defensin-like protein 101 (84 aa).

Residues 1–27 form the signal peptide; that stretch reads MDITKNIVTLLLVVLFPILFYYNNVLA. Cystine bridges form between Cys-39/Cys-81, Cys-43/Cys-67, Cys-52/Cys-79, and Cys-56/Cys-80.

The protein belongs to the DEFL family.

Its subcellular location is the secreted. The chain is Putative defensin-like protein 101 from Arabidopsis thaliana (Mouse-ear cress).